Consider the following 1439-residue polypeptide: Histone-lysine N-methyltransferase NSD3 (1439 aa).

A disordered region spans residues 121–151 (PHEILEKPSPPQPPPPPSVPQTVIPKKTGSP). A compositionally biased stretch (pro residues) spans 128-139 (PSPPQPPPPPSV). Ser-150 carries the phosphoserine modification. The KIKL motif lies at 154–157 (KLKI). Residues 181–247 (QASEHTKSKH…PREEPVLKEA (67 aa)) are disordered. The span at 187-201 (KSKHESRKEKRKKSN) shows a compositional bias: basic residues. Residues 202-244 (RHESSRSEERRSHKIPKLEPEGQNRPNERVDTAPEKPREEPVL) show a composition bias toward basic and acidic residues. Residues Lys-218 and Lys-245 each participate in a glycyl lysine isopeptide (Lys-Gly) (interchain with G-Cter in SUMO2) cross-link. In terms of domain architecture, PWWP 1 spans 270 to 333 (VGDLVWSKVG…EKRVREYKGH (64 aa)). Disordered stretches follow at residues 344–367 (AKQA…ERAQ) and 401–466 (EASS…PPPV). 2 stretches are compositionally biased toward polar residues: residues 401–413 (EASS…VTSK) and 425–445 (VLNS…QSST). Residue Lys-413 forms a Glycyl lysine isopeptide (Lys-Gly) (interchain with G-Cter in SUMO2) linkage. Residue Ser-457 is modified to Phosphoserine. Glycyl lysine isopeptide (Lys-Gly) (interchain with G-Cter in SUMO2) cross-links involve residues Lys-502 and Lys-532. The interval 540-695 (QDRLIISSPS…VDSSLSRRGV (156 aa)) is disordered. A compositionally biased stretch (polar residues) spans 546-568 (SSPSQRSEKPAQSASSPEATSGS). Residues 583-595 (TRSESEKSAEVVP) are compositionally biased toward basic and acidic residues. A phosphoserine mark is found at Ser-585, Ser-587, and Ser-590. Lys-628 is covalently cross-linked (Glycyl lysine isopeptide (Lys-Gly) (interchain with G-Cter in SUMO2)). A compositionally biased stretch (polar residues) spans 637–648 (STDVETASCTYR). Ser-655 carries the phosphoserine modification. Positions 670–691 (DSPSATADADASDAQSVDSSLS) are enriched in low complexity. PHD-type zinc fingers lie at residues 701-748 (DTVC…CETG), 749-805 (QHPC…CSME), and 862-955 (VGFC…CKAG). Lys-790 carries the post-translational modification N6-acetyllysine. A PWWP 2 domain is found at 960-1025 (YKQIVWVKLG…QGRVFPYVEG (66 aa)). The stretch at 1036-1065 (INKTFKKALEEAAKRFQELKAQRESKEALE) forms a coiled coil. One can recognise an AWS domain in the interval 1096-1146 (SEIPRCNCKPGDENPCGLESQCLNRMSQYECHPQVCPAGDRCQNQCFTKRL). Positions 1148 to 1265 (PDAEVIKTER…AGMELTFNYN (118 aa)) constitute an SET domain. Lys-1154 is covalently cross-linked (Glycyl lysine isopeptide (Lys-Gly) (interchain with G-Cter in SUMO2)). The Post-SET domain maps to 1272-1288 (GRTVCHCGADNCSGFLG). The segment at 1323 to 1370 (EDYCFQCGDGGELVMCDKKDCPKAYHLLCLNLTQPPHGKWECPWHRCD) adopts a PHD-type 4; atypical zinc-finger fold.

The protein belongs to the class V-like SAM-binding methyltransferase superfamily. Histone-lysine methyltransferase family. SET2 subfamily. In terms of assembly, interacts with BRD4. Interacts (via KIKL motif) with BRD3 (via NET domain).

The protein resides in the nucleus. Its subcellular location is the chromosome. The catalysed reaction is L-lysyl(4)-[histone H3] + 2 S-adenosyl-L-methionine = N(6),N(6)-dimethyl-L-lysyl(4)-[histone H3] + 2 S-adenosyl-L-homocysteine + 2 H(+). It catalyses the reaction L-lysyl(27)-[histone H3] + 2 S-adenosyl-L-methionine = N(6),N(6)-dimethyl-L-lysyl(27)-[histone H3] + 2 S-adenosyl-L-homocysteine + 2 H(+). Histone methyltransferase. Preferentially dimethylates 'Lys-4' and 'Lys-27' of histone H3 forming H3K4me2 and H3K27me2. H3 'Lys-4' methylation represents a specific tag for epigenetic transcriptional activation, while 'Lys-27' is a mark for transcriptional repression. In Mus musculus (Mouse), this protein is Histone-lysine N-methyltransferase NSD3 (Nsd3).